The chain runs to 186 residues: Lumazine protein (186 aa).

Lumazine-binding repeat units lie at residues 1 to 96 and 97 to 186; these read MFRG…VGRG and GLTG…LNEW.

It depends on 6,7-dimethyl-8-(1-D-ribityl)lumazine as a cofactor.

Antenna protein that modulates the color of the bioluminescence emission of the luciferase. In the presence of LumP, luciferase emission is shifted to higher energy values (shorter wavelength). The sequence is that of Lumazine protein (lumP) from Photobacterium leiognathi.